The primary structure comprises 96 residues: uncharacterized protein (96 aa).

An N-terminal signal peptide occupies residues 1-21; that stretch reads MLASVLILGAIAVGSAIPTIA.

This is an uncharacterized protein from Archaeoglobus fulgidus (strain ATCC 49558 / DSM 4304 / JCM 9628 / NBRC 100126 / VC-16).